Reading from the N-terminus, the 54-residue chain is Potassium channel toxin alpha-KTx 14.x (54 aa).

An N-terminal signal peptide occupies residues Met-1–Gly-23. Cystine bridges form between Cys-30–Cys-46, Cys-36–Cys-51, and Cys-40–Cys-53.

Belongs to the short scorpion toxin superfamily. Potassium channel inhibitor family. Alpha-KTx 14 subfamily. In terms of tissue distribution, expressed by the venom gland.

The protein resides in the secreted. In terms of biological role, potassium channels inhibitor. This Olivierus martensii (Manchurian scorpion) protein is Potassium channel toxin alpha-KTx 14.x.